The sequence spans 487 residues: Complement C1r subcomponent-like protein (487 aa).

A signal peptide spans 1 to 35; the sequence is MPGPRVWGKYLWRSPHSKGCPGAMWWLLLWGVLQA. Positions 39–163 constitute a CUB domain; it reads RGSVLLAQEL…KGFLALYQTV (125 aa). Cysteine 94 and cysteine 112 are disulfide-bonded. N-linked (GlcNAc...) asparagine glycans are attached at residues asparagine 147 and asparagine 166. A Sushi domain is found at 165-230; sequence VNYSQPISEA…DGEEVLQCMP (66 aa). Cysteine 195 and cysteine 228 form a disulfide bridge. Asparagine 242 is a glycosylation site (N-linked (GlcNAc...) (complex) asparagine). Positions 245-484 constitute a Peptidase S1 domain; it reads TLGSSRAKLG…YVDWIKGVMN (240 aa). The Charge relay system role is filled by histidine 283. Asparagine 296 carries N-linked (GlcNAc...) asparagine glycosylation. The active-site Charge relay system is aspartate 339. N-linked (GlcNAc...) asparagine glycosylation occurs at asparagine 363. Cystine bridges form between cysteine 402–cysteine 421 and cysteine 432–cysteine 462. The active-site Charge relay system is serine 436.

The protein belongs to the peptidase S1 family. In terms of tissue distribution, highly expressed in placenta, liver, kidney, pancreas, moderately in lung, spleen, prostate, ovary, colon, and PBL, and weakly in heart, skeletal muscle, thymus, testis, and small intestine. Expressed in PC-3 (prostate adenocarcinoma) and SK-OV-3 (ovary adenocarcinoma) cells, but not in LoVo and HT-29 (colon adenocarcinoma), SMMC7721 (hepatocellular carcinoma), CaoV-3 (ovary adenocarcinoma), HeLa (cervix epithelioid carcinoma), MCF-7 (breast adenocarcinoma), U-251MG (glioma) or A-549 (lung carcinoma) cells. Widely expressed in myeloid leukemia cell lines, including K-562 (chronic myelogenous leukemia), THP-1 (myelomonocytic leukemia), HL-60 and NB4 (promyelocytic leukemia), and KG-1 (acute myelogenous leukemia) cells. Expressed mainly in the liver and in serum (at protein level).

The protein resides in the secreted. In terms of biological role, mediates the proteolytic cleavage of HP/haptoglobin in the endoplasmic reticulum. The polypeptide is Complement C1r subcomponent-like protein (C1RL) (Homo sapiens (Human)).